We begin with the raw amino-acid sequence, 440 residues long: tRNA(Ile)-lysidine synthase (440 aa).

Residue 31–36 (SGGADS) participates in ATP binding.

This sequence belongs to the tRNA(Ile)-lysidine synthase family.

It is found in the cytoplasm. The catalysed reaction is cytidine(34) in tRNA(Ile2) + L-lysine + ATP = lysidine(34) in tRNA(Ile2) + AMP + diphosphate + H(+). Ligates lysine onto the cytidine present at position 34 of the AUA codon-specific tRNA(Ile) that contains the anticodon CAU, in an ATP-dependent manner. Cytidine is converted to lysidine, thus changing the amino acid specificity of the tRNA from methionine to isoleucine. This chain is tRNA(Ile)-lysidine synthase, found in Borrelia garinii subsp. bavariensis (strain ATCC BAA-2496 / DSM 23469 / PBi) (Borreliella bavariensis).